Reading from the N-terminus, the 510-residue chain is Indoleacetate--CoA ligase (510 aa).

This sequence belongs to the ATP-dependent AMP-binding enzyme family. Monomer.

The catalysed reaction is (indol-3-yl)acetate + ATP + CoA = (indol-3-yl)acetyl-CoA + AMP + diphosphate. It catalyses the reaction (indol-3-yl)acetate + ATP + H(+) = (indol-3-yl)acetyl-AMP + diphosphate. It carries out the reaction (indol-3-yl)acetyl-AMP + CoA = (indol-3-yl)acetyl-CoA + AMP + H(+). Inhibited by high concentrations of substrates, and by the synthetic auxin compound 2,4-dichlorophenoxyacetate (2,4-D), which does not serve as substrate. Its function is as follows. Involved in degradation of indoleacetate, the most common member of the auxin class of plant hormones. Highly specific indoleacetate-CoA ligase which catalyzes the ATP-dependent activation of indoleacetate (IAA) to indoleacetyl-CoA. Also activates some closely related compounds such as the non-physiological compound (2-naphthyl)acetate and phenylacetate, which seems to be a fortuitous substrate for IaaB. The protein is Indoleacetate--CoA ligase of Aromatoleum aromaticum (strain DSM 19018 / LMG 30748 / EbN1) (Azoarcus sp. (strain EbN1)).